Reading from the N-terminus, the 500-residue chain is Centrosomal protein of 57 kDa (500 aa).

A compositionally biased stretch (low complexity) spans 1-16 (MAAASVSAASDSQFSS). The disordered stretch occupies residues 1–59 (MAAASVSAASDSQFSSVLAEPSRSNGNMVRHSSSPYVLYPPDKPFLNSDLRRSPNKPTF). Positions 22–35 (SRSNGNMVRHSSSP) are enriched in polar residues. Ser-53 bears the Phosphoserine mark. The segment at 58–239 (TFAYPESNSR…RAAELQSGLE (182 aa)) is centrosome localization domain (CLD). Positions 63-242 (ESNSRAIFSA…ELQSGLEANR (180 aa)) form a coiled coil. Disordered stretches follow at residues 256-275 (STRK…GSRT) and 432-478 (QKKE…RKNL). Residues 278–491 (GAQPHYRLCL…KDMQTIQNSL (214 aa)) are mediates interaction with microtubules. Residues 389-449 (TVELKDNLEC…KKTLDEEGNS (61 aa)) are a coiled coil. Composition is skewed to basic and acidic residues over residues 432–444 (QKKE…KTLD) and 461–475 (SKKD…EKSR).

Belongs to the translokin family. As to quaternary structure, interacts with FGF2 and RAP80. Does not interact with FGF1 or FGF2 isoform 24 kDa. Homodimer and homooligomer. Interacts with microtubules. Ubiquitous (at protein level). Expressed in testis, predominantly in round spermatids. Low expression is detected in other tissues.

Its subcellular location is the nucleus. It is found in the cytoplasm. The protein localises to the cytoskeleton. The protein resides in the microtubule organizing center. It localises to the centrosome. In terms of biological role, centrosomal protein which may be required for microtubule attachment to centrosomes. May act by forming ring-like structures around microtubules. Mediates nuclear translocation and mitogenic activity of the internalized growth factor FGF2. The polypeptide is Centrosomal protein of 57 kDa (Cep57) (Mus musculus (Mouse)).